A 1133-amino-acid chain; its full sequence is Early transcription factor large subunit homolog (1133 aa).

Positions 52–352 (KGGRAFFPCD…PNGQPLQRQQ (301 aa)) constitute a Helicase ATP-binding domain. 99 to 106 (WQTGTGKS) serves as a coordination point for ATP. The short motif at 281 to 284 (DEIH) is the DEAH box element. The 201-residue stretch at 524 to 724 (MMKDILSIIR…EGDKALRKHA (201 aa)) folds into the Helicase C-terminal domain.

The protein belongs to the DEAD box helicase family. DEAH subfamily.

It localises to the virion. It catalyses the reaction ATP + H2O = ADP + phosphate + H(+). Putative initation factor. The protein is Early transcription factor large subunit homolog of Ornithodoros (relapsing fever ticks).